Consider the following 149-residue polypeptide: MQVILLDKIVHLGNVGDQVNVKSGFARNFLIPQGKAVMATKANIEHFEARRAEIEAKVAAELAAAQARAAQIAALEAVTISSKAGDEGRLFGSITTREIAEAVTAAGVEVAKSEVRLSTGPIRTLGDHEVKFQLHGEVFTALNVIVVAE.

This sequence belongs to the bacterial ribosomal protein bL9 family.

Functionally, binds to the 23S rRNA. In Mannheimia succiniciproducens (strain KCTC 0769BP / MBEL55E), this protein is Large ribosomal subunit protein bL9.